The following is a 277-amino-acid chain: Phosphoribosylaminoimidazole-succinocarboxamide synthase (277 aa).

The protein belongs to the SAICAR synthetase family.

It catalyses the reaction 5-amino-1-(5-phospho-D-ribosyl)imidazole-4-carboxylate + L-aspartate + ATP = (2S)-2-[5-amino-1-(5-phospho-beta-D-ribosyl)imidazole-4-carboxamido]succinate + ADP + phosphate + 2 H(+). The protein operates within purine metabolism; IMP biosynthesis via de novo pathway; 5-amino-1-(5-phospho-D-ribosyl)imidazole-4-carboxamide from 5-amino-1-(5-phospho-D-ribosyl)imidazole-4-carboxylate: step 1/2. The sequence is that of Phosphoribosylaminoimidazole-succinocarboxamide synthase from Salinispora arenicola (strain CNS-205).